The chain runs to 223 residues: Ras-related protein RABA4c (223 aa).

GTP is bound at residue 22–29 (GDSAVGKS). Positions 44 to 52 (SKATIGVEF) match the Effector region motif. Residues 70–74 (DTAGQ), 128–131 (NKTD), and 158–159 (SA) each bind GTP. Residues Cys219 and Cys220 are each lipidated (S-geranylgeranyl cysteine).

This sequence belongs to the small GTPase superfamily. Rab family.

The protein localises to the cell membrane. Functionally, intracellular vesicle trafficking and protein transport. This chain is Ras-related protein RABA4c (RABA4C), found in Arabidopsis thaliana (Mouse-ear cress).